Consider the following 187-residue polypeptide: Cell division protein SepF (187 aa).

The segment at 21 to 97 (EVEVPDKQQQ…ATPNNASQES (77 aa)) is disordered. 2 stretches are compositionally biased toward polar residues: residues 38-63 (EQSQ…YTTT) and 70-97 (RMSN…SQES).

This sequence belongs to the SepF family. Homodimer. Interacts with FtsZ.

It is found in the cytoplasm. Its function is as follows. Cell division protein that is part of the divisome complex and is recruited early to the Z-ring. Probably stimulates Z-ring formation, perhaps through the cross-linking of FtsZ protofilaments. Its function overlaps with FtsA. The protein is Cell division protein SepF of Staphylococcus aureus (strain Mu3 / ATCC 700698).